A 458-amino-acid polypeptide reads, in one-letter code: Glutamyl-tRNA reductase (458 aa).

Substrate contacts are provided by residues 49–52 (TCNR), Ser111, 116–118 (ETE), and Gln122. The Nucleophile role is filled by Cys50. 191-196 (GAGKMS) lines the NADP(+) pocket. Basic and acidic residues-rich tracts occupy residues 426-440 (IPKD…KEVE) and 448-458 (ERGHHESDFHN). Positions 426-458 (IPKDGEEHSSSKEVESVTQSSTERGHHESDFHN) are disordered.

This sequence belongs to the glutamyl-tRNA reductase family. In terms of assembly, homodimer.

It carries out the reaction (S)-4-amino-5-oxopentanoate + tRNA(Glu) + NADP(+) = L-glutamyl-tRNA(Glu) + NADPH + H(+). It functions in the pathway porphyrin-containing compound metabolism; protoporphyrin-IX biosynthesis; 5-aminolevulinate from L-glutamyl-tRNA(Glu): step 1/2. Its function is as follows. Catalyzes the NADPH-dependent reduction of glutamyl-tRNA(Glu) to glutamate 1-semialdehyde (GSA). The chain is Glutamyl-tRNA reductase from Natranaerobius thermophilus (strain ATCC BAA-1301 / DSM 18059 / JW/NM-WN-LF).